A 1232-amino-acid chain; its full sequence is Pyruvate:ferredoxin oxidoreductase (1232 aa).

Thr31 contacts pyruvate. Glu64 is a binding site for thiamine diphosphate. Arg114 serves as a coordination point for pyruvate. CoA contacts are provided by residues 427-431 (ADGTV), Lys459, Asn560, and Asn602. 4Fe-4S ferredoxin-type domains are found at residues 680 to 709 (NVPQWVPENCIQCNQCAFVCPHSAILPVLA) and 736 to 767 (FRIQINTLDCMGCGNCADICPPKEKALVMQPL). Residues Cys689, Cys692, Cys695, Cys699, Cys745, Cys748, Cys751, Cys755, Cys812, and Cys815 each contribute to the [4Fe-4S] cluster site. Residues Glu817, Cys840, and 962-965 (GDGW) each bind thiamine diphosphate. Cys840 is a binding site for [4Fe-4S] cluster. Position 963 (Asp963) interacts with Mg(2+). Residues Asp983 and Asn985 each contribute to the Ca(2+) site. Mg(2+) is bound by residues Thr991 and Val993. 991–996 (TEVYSN) contributes to the thiamine diphosphate binding site. Ca(2+) contacts are provided by Ala1056, Phe1059, Gly1061, and Ser1063. Residue Cys1071 coordinates [4Fe-4S] cluster. Cysteines 1195 and 1212 form a disulfide. The interval 1197-1232 (RDDTPMMARPDSGEACDQNRAGTSEQQGDLSKRTKK) is disordered. Residues 1216–1225 (RAGTSEQQGD) show a composition bias toward polar residues.

This sequence belongs to the pyruvate:ferredoxin/flavodoxin oxidoreductase family. Homodimer. Requires [4Fe-4S] cluster as cofactor. Thiamine diphosphate serves as cofactor. Mg(2+) is required as a cofactor.

The protein localises to the cytoplasm. The catalysed reaction is 2 oxidized [2Fe-2S]-[ferredoxin] + pyruvate + CoA = 2 reduced [2Fe-2S]-[ferredoxin] + acetyl-CoA + CO2 + H(+). Functionally, catalyzes the ferredoxin-dependent oxidative decarboxylation of pyruvate. Required for the transfer of electrons from pyruvate to ferredoxin. Ferredoxin I and ferredoxin II, which are single 4Fe-4S cluster ferredoxins are the most effective electron carriers of POR. In Desulfocurvibacter africanus (Desulfovibrio africanus), this protein is Pyruvate:ferredoxin oxidoreductase.